The chain runs to 377 residues: Putative zinc metalloprotease Atu1380 (377 aa).

H29 serves as a coordination point for Zn(2+). E30 is a catalytic residue. H33 provides a ligand contact to Zn(2+). Transmembrane regions (helical) follow at residues 118 to 140 (VAAG…FGIY), 299 to 321 (LGIS…LNLM), and 351 to 373 (VAFR…NDIS). One can recognise a PDZ domain in the interval 129 to 202 (AILIFAVLFG…TPITVTVERA (74 aa)).

This sequence belongs to the peptidase M50B family. Requires Zn(2+) as cofactor.

It localises to the cell inner membrane. This chain is Putative zinc metalloprotease Atu1380, found in Agrobacterium fabrum (strain C58 / ATCC 33970) (Agrobacterium tumefaciens (strain C58)).